Consider the following 395-residue polypeptide: MASIEAALAEIKRGVEELIPEEELIAKLKEGRPLRIKLGADPTAPDIHLGHTVIFNKLRLFQELGHEVTFLIGDFTAMVGDPTGKNTTRPPLSREDVLRNAETYKEQVFKILDPAKTKIQFNSEWLSELGAEGMIRLAANQTVARMLERDDFKKRYAGGQPIAIHEFMYPLLQGWDSVAMETDVELGGTDQKFNLLMGRELQKSHGQKPQVVLMMPLLVGLDGEKKMSKSAGNYIGISEAPSEMFGKIMSISDDLMWSYYELLSFRPLEEIEQFKADVQAGKNPRDIKVLLAKEIIARFHSEADADAAEQEFVNRFAKNQIPDEMPEFDFDAGTPVANLLKDAGLCASTSEAMRMVKQGAAKVEGEKVADAKFAPEAGTYVFQVGKRKFARITIK.

Residues 42-51 (PTAPDIHLGH) carry the 'HIGH' region motif. Residues 226–230 (KMSKS) carry the 'KMSKS' region motif. Lys229 serves as a coordination point for ATP. In terms of domain architecture, S4 RNA-binding spans 334-394 (TPVANLLKDA…GKRKFARITI (61 aa)).

This sequence belongs to the class-I aminoacyl-tRNA synthetase family. TyrS type 2 subfamily. In terms of assembly, homodimer.

The protein resides in the cytoplasm. It catalyses the reaction tRNA(Tyr) + L-tyrosine + ATP = L-tyrosyl-tRNA(Tyr) + AMP + diphosphate + H(+). Functionally, catalyzes the attachment of tyrosine to tRNA(Tyr) in a two-step reaction: tyrosine is first activated by ATP to form Tyr-AMP and then transferred to the acceptor end of tRNA(Tyr). This is Tyrosine--tRNA ligase 2 from Vibrio parahaemolyticus serotype O3:K6 (strain RIMD 2210633).